We begin with the raw amino-acid sequence, 387 residues long: Pepsin A (387 aa).

The signal sequence occupies residues 1 to 15; that stretch reads MKWLLLLSLVALSEC. Positions 16 to 61 are cleaved as a propeptide — activation peptide; the sequence is LYKVSLIKKKSLRKNLIEHGLLKDFLKNNTLDPASKYFPQGEAATM. Positions 75–384 constitute a Peptidase A1 domain; it reads YFGTIGIGTP…DRANNQVGLA (310 aa). Residue D93 is part of the active site. An intrachain disulfide couples C106 to C111. S129 carries the phosphoserine modification. A disulfide bridge links C267 with C271. D276 is a catalytic residue. Residues C310 and C343 are joined by a disulfide bond.

Belongs to the peptidase A1 family.

The protein localises to the secreted. The catalysed reaction is Preferential cleavage: hydrophobic, preferably aromatic, residues in P1 and P1' positions. Cleaves 1-Phe-|-Val-2, 4-Gln-|-His-5, 13-Glu-|-Ala-14, 14-Ala-|-Leu-15, 15-Leu-|-Tyr-16, 16-Tyr-|-Leu-17, 23-Gly-|-Phe-24, 24-Phe-|-Phe-25 and 25-Phe-|-Tyr-26 bonds in the B chain of insulin.. Inhibited by pepstatin. Functionally, shows particularly broad specificity; although bonds involving phenylalanine and leucine are preferred, many others are also cleaved to some extent. This Callithrix jacchus (White-tufted-ear marmoset) protein is Pepsin A (PGA).